Reading from the N-terminus, the 307-residue chain is Protoheme IX farnesyltransferase (307 aa).

9 helical membrane passes run 28–48 (LVIF…NPIL), 50–70 (FTAI…NQWW), 99–117 (FGIL…AINW), 121–138 (IILA…TIWL), 146–166 (IVIG…AVTG), 173–193 (VLLF…LALF), 219–239 (ILVY…IGAT), 241–261 (AIYG…SVPV), and 278–298 (LFGF…ADRY).

The protein belongs to the UbiA prenyltransferase family. Protoheme IX farnesyltransferase subfamily.

The protein localises to the cell inner membrane. It catalyses the reaction heme b + (2E,6E)-farnesyl diphosphate + H2O = Fe(II)-heme o + diphosphate. It participates in porphyrin-containing compound metabolism; heme O biosynthesis; heme O from protoheme: step 1/1. Converts heme B (protoheme IX) to heme O by substitution of the vinyl group on carbon 2 of heme B porphyrin ring with a hydroxyethyl farnesyl side group. In Erythrobacter litoralis (strain HTCC2594), this protein is Protoheme IX farnesyltransferase.